Reading from the N-terminus, the 201-residue chain is GTP-binding protein ryh1 (201 aa).

A GTP-binding site is contributed by 18–25 (GEQSVGKT). Residues 40–48 (YQATIGIDF) carry the Effector region motif. GTP-binding positions include 66–70 (DTAGQ) and 124–127 (NKTD). S-geranylgeranyl cysteine attachment occurs at residues cysteine 199 and cysteine 201. A Cysteine methyl ester modification is found at cysteine 201.

It belongs to the small GTPase superfamily. Rab family.

Its subcellular location is the endosome membrane. The protein localises to the golgi apparatus membrane. It is found in the nucleus. It localises to the cytoplasm. The protein resides in the cytosol. Functionally, has a role in retrograde traffricking of proteins from the endosome to the Golgi. Involved in protein transport to the plasma membrane. Involved in the secretory pathway where it has a role in acid phosphatase secretion. Required also in normal glycosylation trafficking pathways. The polypeptide is GTP-binding protein ryh1 (ryh1) (Schizosaccharomyces pombe (strain 972 / ATCC 24843) (Fission yeast)).